A 393-amino-acid polypeptide reads, in one-letter code: Pre-mRNA splicing factor SR-like 1 (393 aa).

A disordered region spans residues methionine 173 to arginine 393. The span at glutamine 249–arginine 312 shows a compositional bias: basic and acidic residues. The Nuclear localization signal motif lies at serine 301–aspartate 308. Residues histidine 313–serine 325 are compositionally biased toward basic residues. Basic and acidic residues-rich tracts occupy residues glutamine 329 to serine 346 and lysine 356 to isoleucine 385.

It belongs to the PRP38 family. Phosphorylated. Mostly expressed in siliques and leaves, also present in seedlings, flowers and stems, and, at low levels, in roots.

The protein localises to the nucleus. Functionally, may be required for pre-mRNA splicing. Confers salt tolerance to LiCl and NaCl. This is Pre-mRNA splicing factor SR-like 1 from Arabidopsis thaliana (Mouse-ear cress).